We begin with the raw amino-acid sequence, 200 residues long: dITP/XTP pyrophosphatase (200 aa).

Substrate is bound at residue 16 to 21 (SNNDGK). Residues Glu46 and Asp75 each coordinate Mg(2+). Residue Asp75 is the Proton acceptor of the active site. Residues Ser76, 154–157 (FGYD), Lys177, and 182–183 (HR) each bind substrate.

This sequence belongs to the HAM1 NTPase family. As to quaternary structure, homodimer. It depends on Mg(2+) as a cofactor.

The catalysed reaction is XTP + H2O = XMP + diphosphate + H(+). It catalyses the reaction dITP + H2O = dIMP + diphosphate + H(+). It carries out the reaction ITP + H2O = IMP + diphosphate + H(+). Its function is as follows. Pyrophosphatase that catalyzes the hydrolysis of nucleoside triphosphates to their monophosphate derivatives, with a high preference for the non-canonical purine nucleotides XTP (xanthosine triphosphate), dITP (deoxyinosine triphosphate) and ITP. Seems to function as a house-cleaning enzyme that removes non-canonical purine nucleotides from the nucleotide pool, thus preventing their incorporation into DNA/RNA and avoiding chromosomal lesions. The chain is dITP/XTP pyrophosphatase from Prochlorococcus marinus (strain SARG / CCMP1375 / SS120).